A 704-amino-acid polypeptide reads, in one-letter code: Tryptophan synthase (704 aa).

The segment at M1–K292 is tryptophan synthase alpha chain. Residues E49 and D60 each act as proton acceptor in the active site. The segment at G293–K704 is tryptophan synthase beta chain. An N6-(pyridoxal phosphate)lysine modification is found at K380.

In the N-terminal section; belongs to the TrpA family. This sequence in the C-terminal section; belongs to the TrpB family. It depends on pyridoxal 5'-phosphate as a cofactor.

The catalysed reaction is (1S,2R)-1-C-(indol-3-yl)glycerol 3-phosphate + L-serine = D-glyceraldehyde 3-phosphate + L-tryptophan + H2O. It participates in amino-acid biosynthesis; L-tryptophan biosynthesis; L-tryptophan from chorismate: step 5/5. The protein is Tryptophan synthase (TRP-1) of Coprinopsis cinerea (strain Okayama-7 / 130 / ATCC MYA-4618 / FGSC 9003) (Inky cap fungus).